The following is a 486-amino-acid chain: MPRKANLLKSLARGRVRTSFNKYNLFNLYKKGGVDLKSKSLYQQKWTAKQETRAYHGEHLTEKRWQTVFKPKLDSVAQLDASLRGGEIKETPFLLQTFAVLEKRLDFALFRAMFASSVRQARQFILHGNVRVNGVKIKHPSYTLKPGDMFSVKPDKVLEALGAKKPSFQEALKIDKTQIVLWNKYVKEAKTEPKEVWEKKLENFEKMSDSNPKKLQFQEFLRQYNKNLESQQYNALKGCTQEGILRKLLNVEKEIGKSNNEPLSIDELKQGLPEIQDSQLLESLNNAYQEFFKSGEIRREIISKCQPDELISLATEMMNPNETTKKELSDGAKSALRSGKRIIAESVKLWTKNITDHFKTRMSDISDGSLTFDPKWAKNLKYHDPIKLSELEGDEPKARKLINLPWQKNYVYGRQDPKKPFFTPWKPRPFLSPFAILPHHLEISFKTCHAVYLRDPVARPGQSEVISPFDVPVHERAYMYYLRNGK.

Residues 103–172 (KRLDFALFRA…AKKPSFQEAL (70 aa)) form the S4 RNA-binding domain.

This sequence belongs to the universal ribosomal protein uS4 family. Component of the mitochondrial small ribosomal subunit (mt-SSU). Mature yeast 74S mitochondrial ribosomes consist of a small (37S) and a large (54S) subunit. The 37S small subunit contains a 15S ribosomal RNA (15S mt-rRNA) and 34 different proteins. The 54S large subunit contains a 21S rRNA (21S mt-rRNA) and 46 different proteins. uS3m, uS4m and uS5m form the narrow entry site of the mRNA channel.

The protein localises to the mitochondrion. In terms of biological role, component of the mitochondrial ribosome (mitoribosome), a dedicated translation machinery responsible for the synthesis of mitochondrial genome-encoded proteins, including at least some of the essential transmembrane subunits of the mitochondrial respiratory chain. The mitoribosomes are attached to the mitochondrial inner membrane and translation products are cotranslationally integrated into the membrane. In Saccharomyces cerevisiae (strain ATCC 204508 / S288c) (Baker's yeast), this protein is Small ribosomal subunit protein uS4m (NAM9).